Here is a 37-residue protein sequence, read N- to C-terminus: Large ribosomal subunit protein bL36 (37 aa).

It belongs to the bacterial ribosomal protein bL36 family.

In Oleidesulfovibrio alaskensis (strain ATCC BAA-1058 / DSM 17464 / G20) (Desulfovibrio alaskensis), this protein is Large ribosomal subunit protein bL36 (rpmJ).